The following is a 903-amino-acid chain: Alanine--tRNA ligase (903 aa).

Zn(2+) is bound by residues histidine 581, histidine 585, cysteine 693, and histidine 697.

Belongs to the class-II aminoacyl-tRNA synthetase family. Zn(2+) is required as a cofactor.

It is found in the cytoplasm. It carries out the reaction tRNA(Ala) + L-alanine + ATP = L-alanyl-tRNA(Ala) + AMP + diphosphate. In terms of biological role, catalyzes the attachment of alanine to tRNA(Ala) in a two-step reaction: alanine is first activated by ATP to form Ala-AMP and then transferred to the acceptor end of tRNA(Ala). Also edits incorrectly charged Ser-tRNA(Ala) and Gly-tRNA(Ala) via its editing domain. This Psychrobacter sp. (strain PRwf-1) protein is Alanine--tRNA ligase.